The sequence spans 150 residues: Small ribosomal subunit protein uS11x (150 aa).

This sequence belongs to the universal ribosomal protein uS11 family.

It localises to the cytoplasm. This chain is Small ribosomal subunit protein uS11x (RPS14C), found in Arabidopsis thaliana (Mouse-ear cress).